The chain runs to 185 residues: MLNDVINEYEAHLKKATEALRHHLASIRTGRASAALVEHLHVEAYGTNMPLNQLANISVPEPRMIIIQPYDTGMIKAIEKAIQQSDLGLNPSNDGRIIRLPVPPLTEERRRELVKMVRHRVEEVKVSVRNQRRDAIDDLKKLEADKLISEDELHRGQERIQQLTDRCNRELDQIGAEKEAEVMAI.

The protein belongs to the RRF family.

The protein resides in the cytoplasm. Responsible for the release of ribosomes from messenger RNA at the termination of protein biosynthesis. May increase the efficiency of translation by recycling ribosomes from one round of translation to another. This is Ribosome-recycling factor from Chloroflexus aggregans (strain MD-66 / DSM 9485).